Consider the following 260-residue polypeptide: Methylphosphonate hydroxylase (260 aa).

A 2-oxoglutarate-binding site is contributed by lysine 107. The Fe cation site is built by histidine 117, aspartate 119, and histidine 195.

This sequence belongs to the PhyH family. Requires Fe(2+) as cofactor.

It catalyses the reaction methylphosphonate + 2-oxoglutarate + O2 = hydroxymethylphosphonate + succinate + CO2. Its function is as follows. Part of an oxidative pathway for utilization of methylphosphonic acid as a phosphate source. Catalyzes the conversion of methylphosphonic acid to hydroxymethylphosphonic acid. Is specific for the hydroxylation of methylphosphonate. This is Methylphosphonate hydroxylase from Gimesia maris (strain ATCC 29201 / DSM 8797 / 534-30) (Planctomyces maris).